The chain runs to 155 residues: Transcription antitermination protein NusB (155 aa).

Belongs to the NusB family.

Its function is as follows. Involved in transcription antitermination. Required for transcription of ribosomal RNA (rRNA) genes. Binds specifically to the boxA antiterminator sequence of the ribosomal RNA (rrn) operons. The polypeptide is Transcription antitermination protein NusB (Ralstonia nicotianae (strain ATCC BAA-1114 / GMI1000) (Ralstonia solanacearum)).